The primary structure comprises 138 residues: Ribonuclease VapC21 (138 aa).

The PINc domain occupies 6-128 (LLDKSAAYRA…ERIAAITRQP (123 aa)). Mg(2+) contacts are provided by aspartate 8 and aspartate 97.

Belongs to the PINc/VapC protein family. Requires Mg(2+) as cofactor.

In terms of biological role, toxic component of a type II toxin-antitoxin (TA) system. An RNase. Its toxic effect is neutralized by coexpression with cognate antitoxin VapB21. In Mycobacterium tuberculosis (strain CDC 1551 / Oshkosh), this protein is Ribonuclease VapC21.